The following is a 237-amino-acid chain: H/ACA ribonucleoprotein complex subunit 1 (237 aa).

2 stretches are compositionally biased toward gly residues: residues 1–59 (MGFG…GGRG) and 172–237 (RGGG…RGRW). Disordered stretches follow at residues 1–64 (MGFG…FDTG) and 157–237 (KPPQ…RGRW). 2 RGG-box regions span residues 4 to 56 (GKPR…GRGG) and 166 to 236 (KAFT…GRGR).

The protein belongs to the GAR1 family. As to quaternary structure, component of the box H/ACA small nucleolar ribonucleoprotein (H/ACA snoRNP) complex consisting of Nop60B, Gar1, NPH2 and Nop10, and associated with H/ACA-type snoRNAs.

The protein resides in the nucleus. It localises to the nucleolus. Functionally, component of the box H/ACA small nucleolar ribonucleoprotein (H/ACA snoRNP) complex, which catalyzes pseudouridylation of rRNA. This involves the isomerization of uridine such that the ribose is subsequently attached to C5, instead of the normal N1. Pseudouridine ('psi') residues may serve to stabilize the conformation of rRNAs. Required for ribosome biogenesis. H/ACA snoRNP complex-dependent ribosome biogenesis is important in female germline cell differentiation during oogenesis. The sequence is that of H/ACA ribonucleoprotein complex subunit 1 from Drosophila melanogaster (Fruit fly).